The following is a 132-amino-acid chain: ATP synthase epsilon chain (132 aa).

Belongs to the ATPase epsilon chain family. As to quaternary structure, F-type ATPases have 2 components, CF(1) - the catalytic core - and CF(0) - the membrane proton channel. CF(1) has five subunits: alpha(3), beta(3), gamma(1), delta(1), epsilon(1). CF(0) has three main subunits: a, b and c.

It localises to the cell membrane. Produces ATP from ADP in the presence of a proton gradient across the membrane. The polypeptide is ATP synthase epsilon chain (Desulfitobacterium hafniense (strain Y51)).